A 130-amino-acid chain; its full sequence is Sirohydrochlorin cobaltochelatase (130 aa).

The active-site Proton acceptor is histidine 12. Histidine 12 contributes to the Co(2+) binding site. Histidine 12 contributes to the Ni(2+) binding site. Residues glutamate 48 and 73 to 78 (LASGVH) contribute to the substrate site. A Co(2+)-binding site is contributed by histidine 78. Histidine 78 contributes to the Ni(2+) binding site.

This sequence belongs to the CbiX family. CbiXS subfamily. As to quaternary structure, homotetramer; dimer of dimers.

It catalyses the reaction Co-sirohydrochlorin + 2 H(+) = sirohydrochlorin + Co(2+). The catalysed reaction is Ni-sirohydrochlorin + 2 H(+) = sirohydrochlorin + Ni(2+). Its pathway is cofactor biosynthesis; adenosylcobalamin biosynthesis; cob(II)yrinate a,c-diamide from sirohydrochlorin (anaerobic route): step 1/10. Its function is as follows. Catalyzes the insertion of Co(2+) into sirohydrochlorin as part of the anaerobic pathway to cobalamin biosynthesis. Involved in the biosynthesis of the unique nickel-containing tetrapyrrole coenzyme F430, the prosthetic group of methyl-coenzyme M reductase (MCR), which plays a key role in methanogenesis and anaerobic methane oxidation. Catalyzes the insertion of Ni(2+) into sirohydrochlorin to yield Ni-sirohydrochlorin. The chain is Sirohydrochlorin cobaltochelatase from Methanosarcina barkeri (strain Fusaro / DSM 804).